Here is a 541-residue protein sequence, read N- to C-terminus: Putative ammonium transporter sll0537 (541 aa).

Transmembrane regions (helical) follow at residues 6–26 (TLWL…FMCL), 44–64 (FADF…IMFG), 86–106 (LAVF…IISG), 117–137 (YLLV…DWAW), 161–181 (FAGS…TILV), 203–223 (MPFS…FNGG), 235–255 (IMVN…LISL), 260–280 (MIQV…ITAS), 283–303 (VVMT…AYLV), 316–336 (VDAV…VGLF), and 356–376 (LLGI…FLTL).

Belongs to the ammonia transporter channel (TC 1.A.11.2) family.

It localises to the cell membrane. This Synechocystis sp. (strain ATCC 27184 / PCC 6803 / Kazusa) protein is Putative ammonium transporter sll0537.